A 656-amino-acid polypeptide reads, in one-letter code: UvrABC system protein C (656 aa).

In terms of domain architecture, GIY-YIG spans 16–95 (TDPGVYRFRD…IKEYSPRFNV (80 aa)). In terms of domain architecture, UVR spans 208-243 (GRFLRQLEAEMKQAAAAQEYERAARIRDDIQALRTV).

This sequence belongs to the UvrC family. Interacts with UvrB in an incision complex.

The protein resides in the cytoplasm. The UvrABC repair system catalyzes the recognition and processing of DNA lesions. UvrC both incises the 5' and 3' sides of the lesion. The N-terminal half is responsible for the 3' incision and the C-terminal half is responsible for the 5' incision. This Thermobifida fusca (strain YX) protein is UvrABC system protein C.